We begin with the raw amino-acid sequence, 231 residues long: 2,3,4,5-tetrahydropyridine-2,6-dicarboxylate N-acetyltransferase (231 aa).

It belongs to the transferase hexapeptide repeat family. DapH subfamily.

It catalyses the reaction (S)-2,3,4,5-tetrahydrodipicolinate + acetyl-CoA + H2O = L-2-acetamido-6-oxoheptanedioate + CoA. Its pathway is amino-acid biosynthesis; L-lysine biosynthesis via DAP pathway; LL-2,6-diaminopimelate from (S)-tetrahydrodipicolinate (acetylase route): step 1/3. Functionally, catalyzes the transfer of an acetyl group from acetyl-CoA to tetrahydrodipicolinate. This chain is 2,3,4,5-tetrahydropyridine-2,6-dicarboxylate N-acetyltransferase, found in Thermosipho melanesiensis (strain DSM 12029 / CIP 104789 / BI429).